We begin with the raw amino-acid sequence, 401 residues long: Riboflavin biosynthesis protein RibBA (401 aa).

Residues 1 to 203 (MTDFQFSKVE…IQQLQEYRRK (203 aa)) form a DHBP synthase region. D-ribulose 5-phosphate is bound by residues 30 to 31 (RE), aspartate 35, 142 to 146 (RNGHT), and glutamate 166. Glutamate 31 is a Mg(2+) binding site. Mg(2+) is bound at residue histidine 145. The tract at residues 204 to 401 (HDSLVKQISV…QIKMGHMFNF (198 aa)) is GTP cyclohydrolase II. 254-258 (RIHSE) contributes to the GTP binding site. Zn(2+) is bound by residues cysteine 259, cysteine 270, and cysteine 272. Residues glutamine 275, 297–299 (EGR), and threonine 319 each bind GTP. Catalysis depends on aspartate 331, which acts as the Proton acceptor; for GTP cyclohydrolase activity. The active-site Nucleophile; for GTP cyclohydrolase activity is the arginine 333. GTP-binding residues include threonine 354 and lysine 359.

In the N-terminal section; belongs to the DHBP synthase family. The protein in the C-terminal section; belongs to the GTP cyclohydrolase II family. Requires Mg(2+) as cofactor. Mn(2+) serves as cofactor. Zn(2+) is required as a cofactor.

The catalysed reaction is D-ribulose 5-phosphate = (2S)-2-hydroxy-3-oxobutyl phosphate + formate + H(+). The enzyme catalyses GTP + 4 H2O = 2,5-diamino-6-hydroxy-4-(5-phosphoribosylamino)-pyrimidine + formate + 2 phosphate + 3 H(+). It functions in the pathway cofactor biosynthesis; riboflavin biosynthesis; 2-hydroxy-3-oxobutyl phosphate from D-ribulose 5-phosphate: step 1/1. The protein operates within cofactor biosynthesis; riboflavin biosynthesis; 5-amino-6-(D-ribitylamino)uracil from GTP: step 1/4. Catalyzes the conversion of D-ribulose 5-phosphate to formate and 3,4-dihydroxy-2-butanone 4-phosphate. Its function is as follows. Catalyzes the conversion of GTP to 2,5-diamino-6-ribosylamino-4(3H)-pyrimidinone 5'-phosphate (DARP), formate and pyrophosphate. The polypeptide is Riboflavin biosynthesis protein RibBA (Actinobacillus pleuropneumoniae serotype 5b (strain L20)).